We begin with the raw amino-acid sequence, 578 residues long: Rhamnogalacturonate lyase (578 aa).

Residues 1–27 (MHMNKPLQAWRTPLLTLIFVLPLTATG) form the signal peptide.

The protein belongs to the polysaccharide lyase 4 family.

It localises to the secreted. It catalyses the reaction Endotype eliminative cleavage of L-alpha-rhamnopyranosyl-(1-&gt;4)-alpha-D-galactopyranosyluronic acid bonds of rhamnogalacturonan I domains in ramified hairy regions of pectin leaving L-rhamnopyranose at the reducing end and 4-deoxy-4,5-unsaturated D-galactopyranosyluronic acid at the non-reducing end.. Degrades the rhamnogalacturonan I (RG-I) backbone of pectin. Is required for the full virulence of E.chrysanthemi strain 3937 as it is involved in rotting of plant tissue. In Dickeya dadantii (strain 3937) (Erwinia chrysanthemi (strain 3937)), this protein is Rhamnogalacturonate lyase (rhiE).